A 404-amino-acid polypeptide reads, in one-letter code: MKYSEIMVRHGELSTKGKNRMRFINRLKANIQDVLSAYSEVTVRSTRDRTHVLLNGADDRSVIEALKPVFGIQGLSPVYKVEKSVPVLIAAVQEIMSSLYREGLTFKISSKRSDHQFELDSRDLNHTLGAAVFEALPHIKAQMKNPDVTLKVEIRDEAAYLSHEDIKGAGGLPVGASGKGMLMLSGGIDSPVAGYLSLKRGVEIEAVHFASPPYTSPGALRKAKDLTQRLTRFGGNIQFIEVPFTEIQEEIKHKAPEAYLMTLTRRFMLRITDAIREKRKALVIINGESLGQVASQTLESMQAINAVTSTPIIRPVVAMDKLEIIDIAQQIDTFDISIQPFEDCCTIFAPDRPKTNPKLANVERYESRFDVDGLVERAVAGIRVTEITPEIETDSLSTLIEELL.

The THUMP domain occupies 60-165 (RSVIEALKPV…DEAAYLSHED (106 aa)). ATP contacts are provided by residues 183–184 (ML), 208–209 (HF), arginine 265, glycine 287, and glutamine 296.

Belongs to the ThiI family.

The protein localises to the cytoplasm. It carries out the reaction [ThiI sulfur-carrier protein]-S-sulfanyl-L-cysteine + a uridine in tRNA + 2 reduced [2Fe-2S]-[ferredoxin] + ATP + H(+) = [ThiI sulfur-carrier protein]-L-cysteine + a 4-thiouridine in tRNA + 2 oxidized [2Fe-2S]-[ferredoxin] + AMP + diphosphate. The catalysed reaction is [ThiS sulfur-carrier protein]-C-terminal Gly-Gly-AMP + S-sulfanyl-L-cysteinyl-[cysteine desulfurase] + AH2 = [ThiS sulfur-carrier protein]-C-terminal-Gly-aminoethanethioate + L-cysteinyl-[cysteine desulfurase] + A + AMP + 2 H(+). It functions in the pathway cofactor biosynthesis; thiamine diphosphate biosynthesis. Its function is as follows. Catalyzes the ATP-dependent transfer of a sulfur to tRNA to produce 4-thiouridine in position 8 of tRNAs, which functions as a near-UV photosensor. Also catalyzes the transfer of sulfur to the sulfur carrier protein ThiS, forming ThiS-thiocarboxylate. This is a step in the synthesis of thiazole, in the thiamine biosynthesis pathway. The sulfur is donated as persulfide by IscS. The polypeptide is Probable tRNA sulfurtransferase (Streptococcus equi subsp. equi (strain 4047)).